A 117-amino-acid chain; its full sequence is UPF0251 protein DET0218 (117 aa).

The protein belongs to the UPF0251 family.

This Dehalococcoides mccartyi (strain ATCC BAA-2266 / KCTC 15142 / 195) (Dehalococcoides ethenogenes (strain 195)) protein is UPF0251 protein DET0218.